The chain runs to 247 residues: Carboxy-S-adenosyl-L-methionine synthase (247 aa).

Residues tyrosine 39, 64-66 (GCS), 89-90 (DN), 117-118 (DI), asparagine 132, and arginine 199 contribute to the S-adenosyl-L-methionine site.

This sequence belongs to the class I-like SAM-binding methyltransferase superfamily. Cx-SAM synthase family. As to quaternary structure, homodimer.

The enzyme catalyses prephenate + S-adenosyl-L-methionine = carboxy-S-adenosyl-L-methionine + 3-phenylpyruvate + H2O. Functionally, catalyzes the conversion of S-adenosyl-L-methionine (SAM) to carboxy-S-adenosyl-L-methionine (Cx-SAM). The protein is Carboxy-S-adenosyl-L-methionine synthase of Escherichia coli O139:H28 (strain E24377A / ETEC).